We begin with the raw amino-acid sequence, 406 residues long: Argininosuccinate synthase (406 aa).

ATP-binding positions include 12–20 (AYSGGLDTS) and alanine 40. L-citrulline is bound by residues tyrosine 92 and serine 97. An ATP-binding site is contributed by glycine 122. Positions 124, 128, and 129 each coordinate L-aspartate. Asparagine 128 serves as a coordination point for L-citrulline. Positions 132, 181, 190, 266, and 278 each coordinate L-citrulline.

It belongs to the argininosuccinate synthase family. Type 1 subfamily. In terms of assembly, homotetramer.

The protein resides in the cytoplasm. The enzyme catalyses L-citrulline + L-aspartate + ATP = 2-(N(omega)-L-arginino)succinate + AMP + diphosphate + H(+). Its pathway is amino-acid biosynthesis; L-arginine biosynthesis; L-arginine from L-ornithine and carbamoyl phosphate: step 2/3. This Serratia proteamaculans (strain 568) protein is Argininosuccinate synthase.